A 166-amino-acid polypeptide reads, in one-letter code: Large ribosomal subunit protein uL10 (166 aa).

The protein belongs to the universal ribosomal protein uL10 family. As to quaternary structure, part of the ribosomal stalk of the 50S ribosomal subunit. The N-terminus interacts with L11 and the large rRNA to form the base of the stalk. The C-terminus forms an elongated spine to which L12 dimers bind in a sequential fashion forming a multimeric L10(L12)X complex.

Functionally, forms part of the ribosomal stalk, playing a central role in the interaction of the ribosome with GTP-bound translation factors. This chain is Large ribosomal subunit protein uL10, found in Bacillus cereus (strain ATCC 14579 / DSM 31 / CCUG 7414 / JCM 2152 / NBRC 15305 / NCIMB 9373 / NCTC 2599 / NRRL B-3711).